Consider the following 65-residue polypeptide: Large ribosomal subunit protein bL35 (65 aa).

The protein belongs to the bacterial ribosomal protein bL35 family.

The chain is Large ribosomal subunit protein bL35 from Buchnera aphidicola subsp. Cinara cedri (strain Cc).